We begin with the raw amino-acid sequence, 138 residues long: MATRTQARGAVVELLYAFESGNEEIKKIASSMLEEKKIKNNQLAFALSLFNGVLEKINEIDALIEPHLKDWDFKRLGSMEKAILRLGAYEIGFTPTQNPIIINECIELGKLYAEPNTPKFLNAILDSLSKKLAQKPLI.

Belongs to the NusB family.

Functionally, involved in transcription antitermination. Required for transcription of ribosomal RNA (rRNA) genes. Binds specifically to the boxA antiterminator sequence of the ribosomal RNA (rrn) operons. The protein is Transcription antitermination protein NusB of Helicobacter pylori (strain J99 / ATCC 700824) (Campylobacter pylori J99).